The chain runs to 519 residues: Na(+)/H(+) exchange regulatory cofactor NHE-RF3 (519 aa).

The PDZ 1 domain maps to 9–90; it reads ECKLSKQEGQ…SVTLLVLDGD (82 aa). Ser108, Ser148, Ser192, Ser250, Ser334, and Ser348 each carry phosphoserine. PDZ domains follow at residues 134–215 and 243–323; these read RLCY…VDKE and IVEM…VDKE. A disordered region spans residues 347 to 374; sequence GSVKEAPAPTPTSLEVSSPPDTTEEVDH. Over residues 357-367 the composition is skewed to polar residues; the sequence is PTSLEVSSPPD. A PDZ 4 domain is found at 378–458; it reads LCRLAKGENG…NVTLLVCGKK (81 aa). The residue at position 451 (Thr451) is a Phosphothreonine. The disordered stretch occupies residues 479–519; the sequence is DTPPDSKEGIVVESNHDSHMAKERAHSTASHSSSNSEDTEM. Positions 482 to 504 are enriched in basic and acidic residues; that stretch reads PDSKEGIVVESNHDSHMAKERAH. Phosphoserine occurs at positions 492, 508, 510, 511, 512, and 514. A compositionally biased stretch (low complexity) spans 505–519; the sequence is STASHSSSNSEDTEM.

This sequence belongs to the NHER family. In terms of assembly, interacts with PDZK1IP1 and ABCC2. Interacts (via PDZ domains 1 and 3) with SCARB1 (C-terminal domain). Forms a heterodimeric complex with NHERF1. Interacts with AKAP2, BCR, CFTR, SLC22A12, SLC22A4, SLC22A5, NHERF2 and SLC17A1. Component of a complex, composed of PDZK1, SYNGAP1, KLHL17 and NMDA receptors. Interacts (via PDZ1 domain) directly with KLHL17; the interaction is important for integrity of actin cytoskeleton structures in neurons. Interacts (via the first PDZ domain) with PTGIR (via non-isoprenylated C-terminus). Interacts (via C-terminal PDZ domain) with SLC26A6 (via C-terminal domain). Interacts (via C-terminal PDZ domain) with SLC9A3 (via C-terminal domain). Interacts (via PDZ domains 1 and 3) with SLC5A8 (via PDZ-binding motif); interaction increases nicotinate transport activity of SLC5A8. Expression is limited to epithelial cells. Expressed in the kidney (brush border of proximal tubule), pancreas, liver, and small intestine. Expressed at a lower level in the adrenal cortex, testis and stomach. Overexpressed in breast, renal and lung carcinomas.

The protein localises to the membrane. It localises to the cell membrane. A scaffold protein that connects plasma membrane proteins and regulatory components, regulating their surface expression in epithelial cells apical domains. May be involved in the coordination of a diverse range of regulatory processes for ion transport and second messenger cascades. In complex with NHERF1, may cluster proteins that are functionally dependent in a mutual fashion and modulate the trafficking and the activity of the associated membrane proteins. May play a role in the cellular mechanisms associated with multidrug resistance through its interaction with ABCC2 and PDZK1IP1. May potentiate the CFTR chloride channel activity. Required for normal cell-surface expression of SCARB1. Plays a role in maintaining normal plasma cholesterol levels via its effects on SCARB1. Plays a role in the normal localization and function of the chloride-anion exchanger SLC26A6 to the plasma membrane in the brush border of the proximal tubule of the kidney. May be involved in the regulation of proximal tubular Na(+)-dependent inorganic phosphate cotransport therefore playing an important role in tubule function. This Homo sapiens (Human) protein is Na(+)/H(+) exchange regulatory cofactor NHE-RF3 (PDZK1).